The following is a 132-amino-acid chain: Small ribosomal subunit protein uS8c (132 aa).

Belongs to the universal ribosomal protein uS8 family. In terms of assembly, part of the 30S ribosomal subunit.

It is found in the plastid. The protein localises to the chloroplast. One of the primary rRNA binding proteins, it binds directly to 16S rRNA central domain where it helps coordinate assembly of the platform of the 30S subunit. This is Small ribosomal subunit protein uS8c (rps8) from Platanus occidentalis (Sycamore).